We begin with the raw amino-acid sequence, 353 residues long: Divinyl chlorophyll a/b light-harvesting protein PcbG (353 aa).

6 consecutive transmembrane segments (helical) span residues 28 to 48 (FISSHIAHTGLICFGAGANTL), 64 to 84 (GLVVLPHLAGLGLGGISNGVF), 90 to 110 (LLVVAILHLILSGVYGGGGML), 204 to 224 (IMGGHAFLAFFMAAGGVFHIL), 244 to 264 (FVLSTSLAGAAYTAFVAALWC), and 308 to 328 (LTNVHFFIGFFYLQGHFFHGL).

The protein belongs to the PsbB/PsbC family. IsiA/Pcb subfamily. The antenna complex consists of divinyl chlorophylls (a and b) and divinyl chlorophyll a/b binding proteins and binds more divinyl chlorophyll b than does the antenna complex from high-light-adapted Prochlorococcus. Also forms complexes with PSI, consisting of a PSI trimer with surrounded by a PcbG ring (probably with 18 subunits). Is the only subunit found in this ring under iron-replete conditions. It depends on divinyl chlorophyll a as a cofactor. Divinyl chlorophyll b is required as a cofactor.

The protein resides in the cellular thylakoid membrane. The antenna complex functions as a light receptor, it captures and delivers excitation energy to photosystems I. The Prochlorales pcb genes are not related to higher plant LHCs. The polypeptide is Divinyl chlorophyll a/b light-harvesting protein PcbG (pcbG) (Prochlorococcus marinus (strain SARG / CCMP1375 / SS120)).